The chain runs to 202 residues: Superoxide dismutase [Mn] (202 aa).

4 residues coordinate Mn(2+): His-27, His-82, Asp-164, and His-168.

Belongs to the iron/manganese superoxide dismutase family. Homodimer. It depends on Mn(2+) as a cofactor.

The enzyme catalyses 2 superoxide + 2 H(+) = H2O2 + O2. In terms of biological role, destroys superoxide anion radicals which are normally produced within the cells and which are toxic to biological systems. The chain is Superoxide dismutase [Mn] (sodA) from Listeria ivanovii.